A 560-amino-acid chain; its full sequence is MKQSYDYIIIGGGSAGSVLGSRISEDVSNNVLVLEAGRSDYPWDLLIQMPAALMYPAGNKLYDWIYETTPEPHMDGRKVGHARGKVLGGSSSINGMIYQRGNPMDYEKWAKPEGMDSWDYAHCLPYFKRLEKTFGATKDDQFRGHHGPIKLRRGPADNPLFQAFFDAGVEAGYNKTPDVNGFRQEGFGPFDSQVHNGRRVSASRAYLHPAMKRKNLEVQTRAFVTKLNFEGNKVTGVTFKKNGREHTVNAKEVILSGGAINSPQLLQLSGIGDSEHLRSLGIEPRIHLPGVGENFEDHLEVYVQHACKEPVSMQPSLNKLKMPFIGLQWIFGRKGAAASNHFEGGGFVRSNEDVDYPNLMFHFLPIAVRYDGTKAPAAHGYQVHVGPMYSNSRGHLKIKSKDPFVKPDFVFNYLSTEEDKREWVEAIKVARNILGQKALDPYNGGEISPGPEVQTDEEIIEWVKRDGETALHPSCSCRMGPASDEMSVVDPETFKVHGMENLRVVDASVMPRTTNGNIHSPVLMMAEKAADIIRGKKPLDPEYIDFYRHGVHDKDAGTIK.

6–35 (DYIIIGGGSAGSVLGSRISEDVSNNVLVLE) serves as a coordination point for FAD. H472 serves as the catalytic Proton acceptor.

Belongs to the GMC oxidoreductase family. FAD serves as cofactor.

The catalysed reaction is choline + A = betaine aldehyde + AH2. It carries out the reaction betaine aldehyde + NAD(+) + H2O = glycine betaine + NADH + 2 H(+). The protein operates within amine and polyamine biosynthesis; betaine biosynthesis via choline pathway; betaine aldehyde from choline (cytochrome c reductase route): step 1/1. In terms of biological role, involved in the biosynthesis of the osmoprotectant glycine betaine. Catalyzes the oxidation of choline to betaine aldehyde and betaine aldehyde to glycine betaine at the same rate. The polypeptide is Oxygen-dependent choline dehydrogenase (Staphylococcus saprophyticus subsp. saprophyticus (strain ATCC 15305 / DSM 20229 / NCIMB 8711 / NCTC 7292 / S-41)).